Consider the following 380-residue polypeptide: Flap endonuclease 1 (380 aa).

An N-domain region spans residues 1-104 (MGIQGLAKLI…GELAKRSERR (104 aa)). Arg-19 carries the post-translational modification Symmetric dimethylarginine; by PRMT5. Asp-34 is a Mg(2+) binding site. Residues Arg-47 and Arg-70 each coordinate DNA. N6-acetyllysine is present on Lys-80. Asp-86 contacts Mg(2+). Arg-100 and Arg-104 each carry symmetric dimethylarginine; by PRMT5. The interval 122 to 253 (EVEKFTKRLV…KRAVDLIQKH (132 aa)) is I-domain. Mg(2+)-binding residues include Glu-158, Glu-160, Asp-179, and Asp-181. DNA is bound at residue Glu-158. At Ser-187 the chain carries Phosphoserine; by CDK2. Arg-192 is modified (symmetric dimethylarginine; by PRMT5). Ser-197 carries the phosphoserine modification. Gly-231 and Asp-233 together coordinate DNA. Asp-233 lines the Mg(2+) pocket. Phosphoserine is present on residues Ser-255, Ser-293, and Ser-335. Residues 327–380 (RLSKSRQGSTQGRLDDFFKVTGSLSSAKRKEPEPKGSTKKKAKTGAAGKFKRGK) form a disordered region. Thr-336 carries the post-translational modification Phosphothreonine. Positions 336–344 (TQGRLDDFF) are interaction with PCNA. The residue at position 354 (Lys-354) is an N6-acetyllysine. Basic residues predominate over residues 363 to 380 (STKKKAKTGAAGKFKRGK). Thr-364 bears the Phosphothreonine mark. An N6-acetyllysine mark is found at Lys-375, Lys-377, and Lys-380.

The protein belongs to the XPG/RAD2 endonuclease family. FEN1 subfamily. Interacts with PCNA. Three molecules of FEN1 bind to one PCNA trimer with each molecule binding to one PCNA monomer. PCNA stimulates the nuclease activity without altering cleavage specificity. The C-terminal domain binds EP300; can bind simultaneously to both PCNA and EP300. Interacts with DDX11; this interaction is direct and increases flap endonuclease activity of FEN1. Interacts with WDR4; regulating its endonuclease activity. Interacts with POLB. It depends on Mg(2+) as a cofactor. In terms of processing, acetylated by EP300. Acetylation inhibits both endonuclease and exonuclease activity. Acetylation also reduces DNA-binding activity but does not affect interaction with PCNA or EP300. Post-translationally, phosphorylation upon DNA damage induces relocalization to the nuclear plasma. Phosphorylation at Ser-187 by CDK2 occurs during late S-phase and results in dissociation from PCNA. Methylation at Arg-192 by PRMT5 impedes Ser-187 phosphorylation and increases interaction with PCNA.

It localises to the nucleus. It is found in the nucleolus. The protein resides in the nucleoplasm. Its subcellular location is the mitochondrion. Functionally, structure-specific nuclease with 5'-flap endonuclease and 5'-3' exonuclease activities involved in DNA replication and repair. During DNA replication, cleaves the 5'-overhanging flap structure that is generated by displacement synthesis when DNA polymerase encounters the 5'-end of a downstream Okazaki fragment. It enters the flap from the 5'-end and then tracks to cleave the flap base, leaving a nick for ligation. Also involved in the long patch base excision repair (LP-BER) pathway, by cleaving within the apurinic/apyrimidinic (AP) site-terminated flap. Acts as a genome stabilization factor that prevents flaps from equilibrating into structures that lead to duplications and deletions. Also possesses 5'-3' exonuclease activity on nicked or gapped double-stranded DNA, and exhibits RNase H activity. Also involved in replication and repair of rDNA and in repairing mitochondrial DNA. The chain is Flap endonuclease 1 from Homo sapiens (Human).